The following is a 903-amino-acid chain: Translation initiation factor IF-2 (903 aa).

A disordered region spans residues 49-314 (LNREHGSGPD…GSSLQQGFNK (266 aa)). Polar residues predominate over residues 68–82 (STLNIQGTGGKSKSV). Basic and acidic residues-rich tracts occupy residues 93–163 (VKRD…EAAE) and 174–225 (EVSK…ENAT). The span at 265 to 279 (GRARPAKVARQKKSN) shows a compositional bias: basic residues. A compositionally biased stretch (basic and acidic residues) spans 280–293 (KHSESKADREEARA). A tr-type G domain is found at 402-571 (PRAPVVTIMG…LLQSEVLELK (170 aa)). The G1 stretch occupies residues 411–418 (GHVDHGKT). 411–418 (GHVDHGKT) lines the GTP pocket. The segment at 436-440 (GITQH) is G2. The tract at residues 457-460 (DTPG) is G3. GTP contacts are provided by residues 457–461 (DTPGH) and 511–514 (NKID). Positions 511 to 514 (NKID) are G4. The interval 547-549 (SAK) is G5.

It belongs to the TRAFAC class translation factor GTPase superfamily. Classic translation factor GTPase family. IF-2 subfamily.

The protein localises to the cytoplasm. Functionally, one of the essential components for the initiation of protein synthesis. Protects formylmethionyl-tRNA from spontaneous hydrolysis and promotes its binding to the 30S ribosomal subunits. Also involved in the hydrolysis of GTP during the formation of the 70S ribosomal complex. In Cronobacter sakazakii (strain ATCC BAA-894) (Enterobacter sakazakii), this protein is Translation initiation factor IF-2.